The chain runs to 585 residues: Regulatory protein BlaR1 (585 aa).

At 1–4 the chain is on the extracellular side; the sequence is MAKL. Residues 5 to 22 traverse the membrane as a helical segment; the sequence is LIMSIVSFCFIFLLLLFF. At 23-31 the chain is on the cytoplasmic side; sequence RYILKRYFN. A helical transmembrane segment spans residues 32-48; that stretch reads YMLNYKVWYLTLLAGLI. The Extracellular portion of the chain corresponds to 49–104; the sequence is PFIPIKFSLFKFNNVNNQAPTVESKSHDLNHNINTTKPIQEFATDIHKFNWDSIDN. The chain crosses the membrane as a helical span at residues 105–122; it reads ISTVIWIVLVIILSFKFL. Over 123–311 the chain is Cytoplasmic; sequence KALLYLKYLK…NLKKQSKLIL (189 aa). Residues 312–328 form a helical membrane-spanning segment; sequence IFICIFTFLLMVIQSQF. Over 329–585 the chain is Extracellular; sequence LMGQSITDYN…LKEMGVLNGQ (257 aa). The beta-lactam antibiotic sensor domain stretch occupies residues 331 to 585; sequence GQSITDYNYK…LKEMGVLNGQ (255 aa). The active-site Acyl-ester intermediate is Ser389. Lys392 is modified (N6-carboxylysine).

This sequence belongs to the peptidase M56 family. Post-translationally, carboxylation occurs on two lysine residues. Carboxylation at 'Lys-392' activates the active site serine residue for acylation. On acylation, the lysine side chain experiences a spontaneous decarboxylation that entraps the sensor in its activated state.

Its subcellular location is the cell membrane. Integral membrane protein involved in sensing of the presence of beta-lactam antibiotics and transduction of the information to the cytoplasm. Mechanistically, activation of the signal transducer involves acylation of a serine in the C-terminal sensor domain upon binding of the beta-lactam antibiotic. In turn, a conformational change occurs and the signal is transmitted from the cell surface to the cytoplasm. There, the zinc protease domain is activated and initiates autoproteolysis as well as cleavage of the transcriptional repressor BlaI leading to derepression of antibiotic resistance genes. This Staphylococcus aureus protein is Regulatory protein BlaR1 (blaR1).